A 38-amino-acid polypeptide reads, in one-letter code: MDWRVVVVLAPVIIAGSWAIFNIAAAALNQLRNMQTKK.

Residues 5–23 form a helical membrane-spanning segment; sequence VVVVLAPVIIAGSWAIFNI.

It belongs to the PsbY family. PSII is composed of 1 copy each of membrane proteins PsbA, PsbB, PsbC, PsbD, PsbE, PsbF, PsbH, PsbI, PsbJ, PsbK, PsbL, PsbM, PsbT, PsbX, PsbY, PsbZ, Psb30/Ycf12, peripheral proteins PsbO, CyanoQ (PsbQ), PsbU, PsbV and a large number of cofactors. It forms dimeric complexes.

The protein localises to the cellular thylakoid membrane. Loosely associated component of the core of photosystem II (PSII), it is not always seen in crystals. PSII is a light-driven water plastoquinone oxidoreductase, using light energy to abstract electrons from H(2)O, generating a proton gradient subsequently used for ATP formation. The chain is Photosystem II reaction center protein Y from Picosynechococcus sp. (strain ATCC 27264 / PCC 7002 / PR-6) (Agmenellum quadruplicatum).